The following is a 75-amino-acid chain: U6-lycotoxin-Ls1d (75 aa).

An N-terminal signal peptide occupies residues 1–21; sequence MKLLFFTALVLVVISLIEVEA. A propeptide spanning residues 22–25 is cleaved from the precursor; it reads ENER.

This sequence belongs to the neurotoxin 19 (CSTX) family. 06 (U6-Lctx) subfamily. In terms of processing, contains 4 disulfide bonds. As to expression, expressed by the venom gland.

It is found in the secreted. The chain is U6-lycotoxin-Ls1d from Lycosa singoriensis (Wolf spider).